The sequence spans 292 residues: Cyclic dipurine nucleotide synthase (292 aa).

ATP is bound at residue Gln-47. GTP is bound at residue 48–52 (GSYRN). Mg(2+)-binding residues include Asp-61 and Asp-63. ATP contacts are provided by residues Asp-63, 121-122 (NK), and Asp-136. Asp-136 serves as a coordination point for Mg(2+). GTP is bound by residues Lys-197 and Ser-216.

It belongs to the CD-NTase family. E01 subfamily. Mg(2+) serves as cofactor.

The enzyme catalyses 2 ATP = 3',3'-c-di-AMP + 2 diphosphate. It carries out the reaction 2 GTP = 3',3'-c-di-GMP + 2 diphosphate. The catalysed reaction is GTP + ATP = 3',3'-cGAMP + 2 diphosphate. Cyclic nucleotide synthase (second messenger synthase) of a CBASS antivirus system. CBASS (cyclic oligonucleotide-based antiphage signaling system) provides immunity against bacteriophage. The CD-NTase protein synthesizes cyclic nucleotides in response to infection; these serve as specific second messenger signals. The signals activate a diverse range of effectors, leading to bacterial cell death and thus abortive phage infection. A type I-A(GA) CBASS system. Its function is as follows. Cyclic dinucleotide synthase that catalyzes the synthesis of 3'3'-cyclic GMP-AMP (cGAMP) from GTP and ATP, and of c-di-AMP and c-di-GMP, that are second messengers for cell signal transduction. This is Cyclic dipurine nucleotide synthase from Elizabethkingia meningoseptica (Chryseobacterium meningosepticum).